A 218-amino-acid polypeptide reads, in one-letter code: Ribonuclease HII (218 aa).

Residues 23–216 form the RNase H type-2 domain; sequence RFLCGVDEAG…VREAIARGLV (194 aa). 3 residues coordinate a divalent metal cation: Asp-29, Glu-30, and Asp-125.

It belongs to the RNase HII family. The cofactor is Mn(2+). It depends on Mg(2+) as a cofactor.

Its subcellular location is the cytoplasm. It carries out the reaction Endonucleolytic cleavage to 5'-phosphomonoester.. In terms of biological role, endonuclease that specifically degrades the RNA of RNA-DNA hybrids. This chain is Ribonuclease HII, found in Cupriavidus pinatubonensis (strain JMP 134 / LMG 1197) (Cupriavidus necator (strain JMP 134)).